The sequence spans 63 residues: Small ribosomal subunit protein eS27 (63 aa).

Zn(2+)-binding residues include cysteine 18, cysteine 21, cysteine 37, and cysteine 40. A C4-type zinc finger spans residues 18-40 (CIDCGNEQIVFSHPATKVRCLIC).

This sequence belongs to the eukaryotic ribosomal protein eS27 family. In terms of assembly, part of the 30S ribosomal subunit. The cofactor is Zn(2+).

The protein is Small ribosomal subunit protein eS27 of Pyrococcus furiosus (strain ATCC 43587 / DSM 3638 / JCM 8422 / Vc1).